The chain runs to 25 residues: Secapin-1 (25 aa).

A disulfide bridge links cysteine 9 with cysteine 20.

Expressed by the venom gland.

It localises to the secreted. Serine protease inhibitor which exhibits antifibrinolytic, antielastolytic and antimicrobial activities. Displays antimicrobial activity against bacteria and fungi. Likely functions in the innate immune response to microbial infection and possibly in the venom, as an antifibrinolytic agent. This is Secapin-1 from Apis mellifera (Honeybee).